The primary structure comprises 415 residues: L-cysteine:1D-myo-inositol 2-amino-2-deoxy-alpha-D-glucopyranoside ligase 2 (415 aa).

Cys-44 lines the Zn(2+) pocket. L-cysteinyl-5'-AMP contacts are provided by residues 44–47, Thr-59, and 82–84; these read CGIT and NIT. Positions 46–56 match the 'HIGH' region motif; the sequence is ITPYDSTHLGH. Residues 188–193 carry the 'ERGGDP' region motif; that stretch reads ERGGDP. L-cysteinyl-5'-AMP is bound at residue Trp-228. Residue Cys-232 coordinates Zn(2+). L-cysteinyl-5'-AMP is bound at residue 250-252; sequence GSD. His-257 contributes to the Zn(2+) binding site. Ile-284 is a binding site for L-cysteinyl-5'-AMP. The 'KMSKS' region motif lies at 290–294; sequence KMSKS.

The protein belongs to the class-I aminoacyl-tRNA synthetase family. MshC subfamily. Monomer. It depends on Zn(2+) as a cofactor.

The catalysed reaction is 1D-myo-inositol 2-amino-2-deoxy-alpha-D-glucopyranoside + L-cysteine + ATP = 1D-myo-inositol 2-(L-cysteinylamino)-2-deoxy-alpha-D-glucopyranoside + AMP + diphosphate + H(+). Catalyzes the ATP-dependent condensation of GlcN-Ins and L-cysteine to form L-Cys-GlcN-Ins. The chain is L-cysteine:1D-myo-inositol 2-amino-2-deoxy-alpha-D-glucopyranoside ligase 2 from Corynebacterium jeikeium (strain K411).